The following is a 623-amino-acid chain: Glutathione import ATP-binding protein GsiA (623 aa).

ABC transporter domains follow at residues 15–269 (VENL…RALL) and 314–564 (LRVR…RKLL). ATP is bound by residues 49-56 (GESGSGKS) and 357-364 (GESGSGKS).

Belongs to the ABC transporter superfamily. Glutathione importer (TC 3.A.1.5.11) family. As to quaternary structure, the complex is composed of two ATP-binding proteins (GsiA), two transmembrane proteins (GsiC and GsiD) and a solute-binding protein (GsiB).

The protein localises to the cell inner membrane. The catalysed reaction is glutathione(out) + ATP + H2O = glutathione(in) + ADP + phosphate + H(+). In terms of biological role, part of the ABC transporter complex GsiABCD involved in glutathione import. Responsible for energy coupling to the transport system. The chain is Glutathione import ATP-binding protein GsiA from Shigella flexneri.